A 198-amino-acid polypeptide reads, in one-letter code: MRLSSTNMQARKMLFAAILSICASSSKKISIYNEEMIVALCFIGFIIFSWKSLGKTFKVTLDGRIQAIQEESQQFPNPNEVVPPESNEQQRLLRISLRICGTVVESLPMARCAPKCEKTVQALLCRNLNVKSATLPNATSSRRIRLQDDIAIKMHVLVGKRFCPWCSSKAERVEFIRESLVVLRMVWVGDSLKNKELE.

The chain crosses the membrane as a helical span at residues 29–49 (ISIYNEEMIVALCFIGFIIFS).

The protein belongs to the ATPase protein MI25 family. F-type ATPases have 2 components, CF(1) - the catalytic core - and CF(0) - the membrane proton channel. CF(1) has five subunits: alpha(3), beta(3), gamma(1), delta(1), epsilon(1). CF(0) has three main subunits: a, b and c.

The protein resides in the mitochondrion membrane. In terms of biological role, this is one of the chains of the nonenzymatic component (CF(0) subunit) of the mitochondrial ATPase complex. In Nicotiana tabacum (Common tobacco), this protein is ATP synthase protein MI25.